The following is a 449-amino-acid chain: Elongation factor 1-alpha 1 (449 aa).

The tr-type G domain occupies lysine 5–serine 230. The segment at glycine 14–serine 21 is G1. Glycine 14–serine 21 serves as a coordination point for GTP. Positions glycine 70–aspartate 74 are G2. Residues aspartate 91–glycine 94 form a G3 region. Residues aspartate 91–histidine 95 and asparagine 153–aspartate 156 each bind GTP. Residues asparagine 153–aspartate 156 are G4. Positions serine 194–tryptophan 196 are G5. Position 362 is a 5-glutamyl glycerylphosphorylethanolamine (glutamate 362).

Belongs to the TRAFAC class translation factor GTPase superfamily. Classic translation factor GTPase family. EF-Tu/EF-1A subfamily. Post-translationally, phosphatidylethanolamine (PE) is a direct precursor of the ethanolamine-phosphoglycerol (EPG) moiety.

It is found in the cytoplasm. Functionally, this protein promotes the GTP-dependent binding of aminoacyl-tRNA to the A-site of ribosomes during protein biosynthesis. In Trypanosoma brucei brucei (strain 927/4 GUTat10.1), this protein is Elongation factor 1-alpha 1 (TEF1).